Reading from the N-terminus, the 258-residue chain is uncharacterized protein (258 aa).

4 helical membrane passes run 33-53 (LFVIFQVIISIVLLSLSVTTN), 59-79 (FDSWYYFASHLILSLFGIFVF), 88-108 (LLYLYVILLSGLLITASFSFF), and 140-160 (IIALIVVEGVALHPNLSWLIQ). Residues 237 to 258 (NNKINSELQPPSILNKNSKPIE) form a disordered region. Positions 242 to 258 (SELQPPSILNKNSKPIE) are enriched in polar residues.

It localises to the membrane. This is an uncharacterized protein from Dictyostelium discoideum (Social amoeba).